Here is a 355-residue protein sequence, read N- to C-terminus: Protein-glutamate methylesterase/protein-glutamine glutaminase 3 (355 aa).

The 118-residue stretch at 5–122 folds into the Response regulatory domain; the sequence is KVLIVDDSAV…KQFLEESRVR (118 aa). The residue at position 56 (D56) is a 4-aspartylphosphate. Residues 165–355 form the CheB-type methylesterase domain; sequence IQTTEKVVVV…IAREVLRLCG (191 aa). Catalysis depends on residues S177, H203, and D299.

Belongs to the CheB family. Post-translationally, phosphorylated by CheA. Phosphorylation of the N-terminal regulatory domain activates the methylesterase activity.

The protein localises to the cytoplasm. It catalyses the reaction [protein]-L-glutamate 5-O-methyl ester + H2O = L-glutamyl-[protein] + methanol + H(+). It carries out the reaction L-glutaminyl-[protein] + H2O = L-glutamyl-[protein] + NH4(+). Functionally, involved in chemotaxis. Part of a chemotaxis signal transduction system that modulates chemotaxis in response to various stimuli. Catalyzes the demethylation of specific methylglutamate residues introduced into the chemoreceptors (methyl-accepting chemotaxis proteins or MCP) by CheR. Also mediates the irreversible deamidation of specific glutamine residues to glutamic acid. This chain is Protein-glutamate methylesterase/protein-glutamine glutaminase 3, found in Geobacter metallireducens (strain ATCC 53774 / DSM 7210 / GS-15).